A 403-amino-acid chain; its full sequence is Tripartite motif-containing protein 59 (403 aa).

An RING-type zinc finger spans residues 10–60 (CPICYSIFEDPRVLPCSHTFCRNCLENILQASGNFYIWRPLRIPLKCPNCR). The segment at 92–134 (PDIVTCPEHYRQPLNVYCLLDKKLVCGHCLTIGQHHGHPIDDL) adopts a B box-type zinc-finger fold. Residues Cys97, His100, Cys120, and His126 each coordinate Zn(2+). Residues 163–246 (LIEKLKEQKS…ALTISLQEES (84 aa)) adopt a coiled-coil conformation. A helical membrane pass occupies residues 329-349 (ILNIVVVTLISVILMSILFFN).

Belongs to the TRIM/RBCC family. In terms of assembly, interacts with ECSIT.

Its subcellular location is the endoplasmic reticulum membrane. The catalysed reaction is S-ubiquitinyl-[E2 ubiquitin-conjugating enzyme]-L-cysteine + [acceptor protein]-L-lysine = [E2 ubiquitin-conjugating enzyme]-L-cysteine + N(6)-ubiquitinyl-[acceptor protein]-L-lysine.. It functions in the pathway protein modification; protein ubiquitination. E3 ubiquitin ligase involved in different processes such as development and immune response. Serves as a negative regulator for innate immune signaling pathways by suppressing RLR-induced activation of IRF3/7 and NF-kappa-B via interaction with adapter ECSIT. Regulates autophagy through modulating both the transcription and the ubiquitination of BECN1. On the one hand, regulates the transcription of BECN1 through negatively modulating the NF-kappa-B pathway. On the other hand, regulates TRAF6-mediated 'Lys-63'-linked ubiquitination of BECN1, thus affecting the formation of the BECN1-PIK3C3 complex. In addition, mediates 'Lys-48'-linked ubiquitination of TRAF6 and thereby promotes TRAF6 proteasomal degradation. Also acts as a critical regulator for early embryo development from blastocyst stage to gastrula through modulating F-actin assembly and WASH1 'Lys-63'-linked ubiquitination. The sequence is that of Tripartite motif-containing protein 59 (TRIM59) from Homo sapiens (Human).